Here is a 74-residue protein sequence, read N- to C-terminus: Large ribosomal subunit protein uL29 (74 aa).

It belongs to the universal ribosomal protein uL29 family.

In Cyanothece sp. (strain PCC 7425 / ATCC 29141), this protein is Large ribosomal subunit protein uL29.